Consider the following 930-residue polypeptide: Xanthan lyase (930 aa).

Residues 1–25 form the signal peptide; that stretch reads MLSGILIAALLMTLWGGWQPDIAHA. Xanthan is bound by residues 146 to 148, His246, Tyr255, Arg309, 313 to 315, and Asn424; these read NWW and RSY. Tyr255 serves as the catalytic Proton donor/acceptor. The Ca(2+) site is built by Asp515, Asp516, and Glu517. Arg612 is a binding site for xanthan. Glu676 contributes to the Ca(2+) binding site.

The protein belongs to the polysaccharide lyase 8 family. In terms of assembly, monomer.

It is found in the secreted. The catalysed reaction is Eliminative cleavage of the terminal beta-D-mannosyl-(1-&gt;4)-beta-D-glucuronosyl linkage of the side-chain of the polysaccharide xanthan, leaving a 4-deoxy-alpha-L-threo-hex-4-enuronosyl group at the terminus of the side-chain.. With respect to regulation, activated by Co(2+) at 1 mM. Completely inhibited by Hg(2+) but not affected by other divalent cations. Intensely inhibited by NaCl and KCl at 150 mM, in particular by the Na(+) and K(+) ions but not the Cl(-) ions. Partially inhibited by iodoacetamide and N-ethylmaleimide at 1 mM but not by dithiothreitol, reduced glutathione or 2-mercaptoethanol. Functionally, plays a role in xanthan depolymerization pathway by cleaving the linkage between the terminal mannosyl and glucuronyl residues of the side chain of xanthan to liberate pyruvylated mannose. Is highly specific for pyruvylated side-chains of xanthan and is not effective with hyaluronate, chondroitin A, gellan, heparin or pectin. This chain is Xanthan lyase, found in Bacillus sp. (strain GL1).